Consider the following 699-residue polypeptide: Ribosomal RNA large subunit methyltransferase K/L (699 aa).

In terms of domain architecture, THUMP spans 44 to 155; that stretch reads DAYKLCLWSR…RDNVILGIDL (112 aa).

This sequence belongs to the methyltransferase superfamily. RlmKL family.

It localises to the cytoplasm. It catalyses the reaction guanosine(2445) in 23S rRNA + S-adenosyl-L-methionine = N(2)-methylguanosine(2445) in 23S rRNA + S-adenosyl-L-homocysteine + H(+). The enzyme catalyses guanosine(2069) in 23S rRNA + S-adenosyl-L-methionine = N(2)-methylguanosine(2069) in 23S rRNA + S-adenosyl-L-homocysteine + H(+). Specifically methylates the guanine in position 2445 (m2G2445) and the guanine in position 2069 (m7G2069) of 23S rRNA. The polypeptide is Ribosomal RNA large subunit methyltransferase K/L (Alteromonas mediterranea (strain DSM 17117 / CIP 110805 / LMG 28347 / Deep ecotype)).